A 188-amino-acid chain; its full sequence is Insulin-like growth factor 1 (188 aa).

Positions 45–73 are b; the sequence is GPETLCGAELVDTLQFVCGERGFYFSKPT. Disulfide bonds link cysteine 50–cysteine 92, cysteine 62–cysteine 105, and cysteine 91–cysteine 96. The segment at 74 to 85 is c; it reads GYGPSSRRSHNR. The segment at 86–106 is a; sequence GIVDECCFQSCELRRLEMYCA. The tract at residues 107–114 is d; sequence PVKSGKAA. A propeptide spans 115–188 (e peptide); it reads RSVRAQRHTD…GNTGGRNYRM (74 aa). A disordered region spans residues 115–188; that stretch reads RSVRAQRHTD…GNTGGRNYRM (74 aa). Residues 140–153 show a composition bias toward basic and acidic residues; that stretch reads RGTERRTAQHPDKT.

The protein belongs to the insulin family. In terms of tissue distribution, all the isoforms are expressed in embryos, juvenile and adult liver, muscle and brain. At least one isoform is expressed in heart, kidney, testes, ovary, adipose tissue and spleen of juvenile salmon.

The protein resides in the secreted. Functionally, the insulin-like growth factors, isolated from plasma, are structurally and functionally related to insulin but have a much higher growth-promoting activity. Acts as a ligand for IGF1R. Binds to the alpha subunit of IGF1R, leading to the activation of the intrinsic tyrosine kinase activity which autophosphorylates tyrosine residues in the beta subunit thus initiatiating a cascade of down-stream signaling events leading to activation of the PI3K-AKT/PKB and the Ras-MAPK pathways. Binds to integrins. Its binding to integrins and subsequent ternary complex formation with integrins and IGFR1 are essential for IGF1 signaling. This is Insulin-like growth factor 1 from Oncorhynchus kisutch (Coho salmon).